Reading from the N-terminus, the 197-residue chain is Rac-like GTP-binding protein RHO1 (197 aa).

Residue 13–20 coordinates GTP; that stretch reads GDGAVGKT. The short motif at 35 to 43 is the Effector region element; sequence YVPTVFDNF. GTP-binding positions include 60–64 and 118–121; these read DTAGQ and TKLD. C194 is subject to Cysteine methyl ester. C194 is lipidated: S-geranylgeranyl cysteine. A propeptide spans 195 to 197 (removed in mature form); that stretch reads SIL.

Belongs to the small GTPase superfamily. Rho family. As to expression, expressed at the tip of pollen tubes.

The protein localises to the cytoplasm. The protein resides in the membrane. In terms of biological role, inactive GDP-bound Rho GTPases reside in the cytosol, are found in a complex with Rho GDP-dissociation inhibitors (Rho GDIs), and are released from the GDI protein in order to translocate to membranes upon activation. May be involved in cell polarity control during the actin-dependent tip growth of pollen tubes. The protein is Rac-like GTP-binding protein RHO1 (RHO1) of Pisum sativum (Garden pea).